The primary structure comprises 329 residues: Putative methylthioribose-1-phosphate isomerase (329 aa).

Substrate-binding positions include 50–52 (RGA), Arg84, and Gln182. Asp223 (proton donor) is an active-site residue. 233–234 (NK) is a substrate binding site.

This sequence belongs to the eIF-2B alpha/beta/delta subunits family. MtnA subfamily.

The enzyme catalyses 5-(methylsulfanyl)-alpha-D-ribose 1-phosphate = 5-(methylsulfanyl)-D-ribulose 1-phosphate. Its function is as follows. Catalyzes the interconversion of methylthioribose-1-phosphate (MTR-1-P) into methylthioribulose-1-phosphate (MTRu-1-P). This chain is Putative methylthioribose-1-phosphate isomerase, found in Methanocaldococcus jannaschii (strain ATCC 43067 / DSM 2661 / JAL-1 / JCM 10045 / NBRC 100440) (Methanococcus jannaschii).